We begin with the raw amino-acid sequence, 247 residues long: 1-(5-phosphoribosyl)-5-[(5-phosphoribosylamino)methylideneamino] imidazole-4-carboxamide isomerase (247 aa).

Asp8 functions as the Proton acceptor in the catalytic mechanism. Asp131 (proton donor) is an active-site residue.

Belongs to the HisA/HisF family.

The protein localises to the cytoplasm. It catalyses the reaction 1-(5-phospho-beta-D-ribosyl)-5-[(5-phospho-beta-D-ribosylamino)methylideneamino]imidazole-4-carboxamide = 5-[(5-phospho-1-deoxy-D-ribulos-1-ylimino)methylamino]-1-(5-phospho-beta-D-ribosyl)imidazole-4-carboxamide. The protein operates within amino-acid biosynthesis; L-histidine biosynthesis; L-histidine from 5-phospho-alpha-D-ribose 1-diphosphate: step 4/9. This is 1-(5-phosphoribosyl)-5-[(5-phosphoribosylamino)methylideneamino] imidazole-4-carboxamide isomerase from Cupriavidus metallidurans (strain ATCC 43123 / DSM 2839 / NBRC 102507 / CH34) (Ralstonia metallidurans).